The chain runs to 965 residues: Aminopeptidase N (965 aa).

At 1-8 (MAKGFYIS) the chain is on the cytoplasmic side. The helical; Signal-anchor for type II membrane protein transmembrane segment at 9-32 (KALGILAILLGVAAVATIIALSVV) threads the bilayer. The segment at 33-65 (YAQEKNKNAERGTAAPTSPTGPTTTSATTLDQS) is cytosolic Ser/Thr-rich junction. Residues 33-965 (YAQEKNKNAE…VVLNWFKDHS (933 aa)) are Extracellular-facing. The tract at residues 40 to 65 (NAERGTAAPTSPTGPTTTSATTLDQS) is disordered. The segment covering 44-61 (GTAAPTSPTGPTTTSATT) has biased composition (low complexity). The tract at residues 66 to 965 (KPWNRYRLPT…VVLNWFKDHS (900 aa)) is metalloprotease. The N-linked (GlcNAc...) asparagine glycan is linked to asparagine 125. Residue tyrosine 173 is modified to Sulfotyrosine. N-linked (GlcNAc...) asparagine glycans are attached at residues asparagine 231, asparagine 260, and asparagine 316. 349-353 (GAMEN) provides a ligand contact to substrate. Position 385 (histidine 385) interacts with Zn(2+). The active-site Proton acceptor is the glutamate 386. Positions 389 and 408 each coordinate Zn(2+). Tyrosine 416 is modified (sulfotyrosine). Asparagine 508, asparagine 569, asparagine 624, asparagine 680, asparagine 734, and asparagine 738 each carry an N-linked (GlcNAc...) asparagine glycan. Disulfide bonds link cysteine 760-cysteine 767 and cysteine 797-cysteine 833.

It belongs to the peptidase M1 family. As to quaternary structure, homodimer. Interacts with SLC6A19. Requires Zn(2+) as cofactor. Post-translationally, sulfated. N- and O-glycosylated. In terms of processing, may undergo proteolysis and give rise to a soluble form.

The protein resides in the cell membrane. It catalyses the reaction Release of an N-terminal amino acid, Xaa-|-Yaa- from a peptide, amide or arylamide. Xaa is preferably Ala, but may be most amino acids including Pro (slow action). When a terminal hydrophobic residue is followed by a prolyl residue, the two may be released as an intact Xaa-Pro dipeptide.. Its function is as follows. Broad specificity aminopeptidase which plays a role in the final digestion of peptides generated from hydrolysis of proteins by gastric and pancreatic proteases. Also involved in the processing of various peptides including peptide hormones, such as angiotensin III and IV, neuropeptides, and chemokines. May also be involved the cleavage of peptides bound to major histocompatibility complex class II molecules of antigen presenting cells. May have a role in angiogenesis and promote cholesterol crystallization. May have a role in amino acid transport by acting as binding partner of amino acid transporter SLC6A19 and regulating its activity. In Bos taurus (Bovine), this protein is Aminopeptidase N (ANPEP).